A 203-amino-acid polypeptide reads, in one-letter code: Ribonuclease HII (203 aa).

The region spanning 18–203 (GQYAGVDEVG…SFRPVREALA (186 aa)) is the RNase H type-2 domain. A divalent metal cation is bound by residues Asp24, Glu25, and Asp116.

This sequence belongs to the RNase HII family. Mn(2+) is required as a cofactor. The cofactor is Mg(2+).

The protein resides in the cytoplasm. It catalyses the reaction Endonucleolytic cleavage to 5'-phosphomonoester.. Functionally, endonuclease that specifically degrades the RNA of RNA-DNA hybrids. The chain is Ribonuclease HII from Shewanella pealeana (strain ATCC 700345 / ANG-SQ1).